We begin with the raw amino-acid sequence, 180 residues long: Ribulose bisphosphate carboxylase small subunit, chloroplastic 1 (180 aa).

The transit peptide at 1–56 (MASSVLSSAAVATRSNVAQANMVAPFTGLKSAASFPVSRKQNLDITSIASNGGRVQ) directs the protein to the chloroplast.

This sequence belongs to the RuBisCO small chain family. In terms of assembly, heterohexadecamer of 8 large and 8 small subunits.

It localises to the plastid. Its subcellular location is the chloroplast. RuBisCO catalyzes two reactions: the carboxylation of D-ribulose 1,5-bisphosphate, the primary event in carbon dioxide fixation, as well as the oxidative fragmentation of the pentose substrate. Both reactions occur simultaneously and in competition at the same active site. Although the small subunit is not catalytic it is essential for maximal activity. This is Ribulose bisphosphate carboxylase small subunit, chloroplastic 1 from Nicotiana sylvestris (Wood tobacco).